Consider the following 691-residue polypeptide: Germ cell nuclear acidic protein (691 aa).

Residues Ile22–Val25 carry the SUMO interaction motif 1 (SIM) motif. A disordered region spans residues Val25–Thr488. The span at Ser27–Ser36 shows a compositional bias: low complexity. Over residues Cys48–Ser63 the composition is skewed to polar residues. 3 consecutive short sequence motifs (SUMO interaction motif 1 (SIM)) follow at residues Val76 to Ile79, Leu97 to Ile100, and Ile121 to Ser124. Residues Glu86–Leu97 are compositionally biased toward basic and acidic residues. Positions Ser124–Glu333 are enriched in acidic residues. Over residues Gly467 to Thr488 the composition is skewed to basic residues. The 156-residue stretch at Val522–Val677 folds into the SprT-like domain.

Belongs to the serine-aspartate repeat-containing protein (SDr) family. In terms of assembly, interacts (via SIM domains) with SUMO2; this interaction allows the GCNA recruitment to DPCs sites. Interacts with TOP2A; this interaction allows the resolution of topoisomerase II (TOP2A) DNA-protein cross-links. In terms of tissue distribution, expressed in germ cells of the testis (at protein level). Detected in skeletal muscle, liver, kidney, pancreas, heart, lung and brain. Expressed throughout spermatogenesis, from spermatogonia to elongated spermatids, in normal adult testis (at protein level).

It is found in the nucleus. The protein localises to the PML body. Its subcellular location is the chromosome. Its function is as follows. May play a role in DNA-protein cross-links (DPCs) clearance through a SUMO-dependent recruitment to sites of DPCs, ensuring the genomic stability by protecting germ cells and early embryos from various sources of damage. Can resolve the topoisomerase II (TOP2A) DPCs. In Homo sapiens (Human), this protein is Germ cell nuclear acidic protein.